The sequence spans 570 residues: Nucleoprotein (570 aa).

Positions 54 to 236 are binding site for the cap structure m7GTP; that stretch reads LRKTKRTDDD…ITKEESSINI (183 aa). The interval 332-356 is disordered; the sequence is DLTKKPDAVPEPGAAPRPAERKGQN. Residues Asp-386 and Glu-388 each coordinate Mg(2+). Mn(2+)-binding residues include Asp-386 and Glu-388. Zn(2+) contacts are provided by Glu-396, Cys-503, His-506, and Cys-531. Position 535 (Asp-535) interacts with Mg(2+). Asp-535 contacts Mn(2+).

Belongs to the arenaviridae nucleocapsid protein family. In terms of assembly, homomultimerizes to form the nucleocapsid. Binds to viral genomic RNA. Interacts with glycoprotein G2. Interacts with protein Z; this interaction probably directs the encapsidated genome to budding sites. Interacts with protein L; this interaction does not interfere with Z-L interaction. Interacts with host IKBKE (via Protein kinase domain); the interaction inhibits IKBKE kinase activity.

It localises to the virion. The protein localises to the host cytoplasm. Functionally, encapsidates the genome, protecting it from nucleases. The encapsidated genomic RNA is termed the nucleocapsid (NC). Serves as template for viral transcription and replication. The increased presence of protein N in host cell does not seem to trigger the switch from transcription to replication as observed in other negative strain RNA viruses. Through the interaction with host IKBKE, strongly inhibits the phosphorylation and nuclear translocation of host IRF3, a protein involved in interferon activation pathway, leading to the inhibition of interferon-beta and IRF3-dependent promoters activation. Also encodes a functional 3'-5' exoribonuclease that degrades preferentially dsRNA substrates and thereby participates in the suppression of interferon induction. The protein is Nucleoprotein of Artibeus (neotropical fruit bats).